The sequence spans 631 residues: ATP-dependent protease PrkA (631 aa).

Position 217 is a phosphothreonine (Thr-217). Ser-219 is modified (phosphoserine).

Belongs to the PrkA family. Phosphorylated by PrkC on two sites, Thr-217 and Ser-219, with the threonine being the major site of modification.

It is found in the forespore. The protein localises to the spore coat. The catalysed reaction is Hydrolysis of proteins in presence of ATP.. Its activity is regulated as follows. Hydrolase activity is regulated by phosphorylation by the Ser/Thr kinase PrkC, probably allowing fine control of sporulation. Phosphorylation by PrkC does not prevent ATP fixation but it inhibits specifically PrkA protease activity and down-regulates the sporulation processes. Hydrolase activity is inhibited by a protease inhibitor, phenylmethylsulfonyl fluoride (PMSF). Potential kinase activity requires the presence of MgCl(2) and is inhibited in the presence of MnCl(2). In terms of biological role, ATP-dependent protease that regulates sporulation. Is able to bind and hydrolyze ATP. This ATP-dependent protease activity is necessary for efficient sporulation of B.subtilis. In vitro, can hydrolyze alpha-casein, an exogenous substrate of Lon proteases, in an ATP-dependent manner. PrkA also modulates sporulation by negatively regulating the transcriptional regulator Hpr/ScoC to induce the expression of sigK. The control of sporulation mediated via the Hpr/ScoC regulator is probably indirect. PrkA was originally thought to be a protein kinase, as it has been shown to phosphorylate in vitro an unidentified 60 kDa protein from B.subtilis crude extracts at a serine residue. However, Zhang et al. did not observe autophosphorylation or kinase activity for this protein, suggesting that it may have lost its kinase activity during evolution or may be a pseudokinase. This is ATP-dependent protease PrkA from Bacillus subtilis (strain 168).